A 179-amino-acid chain; its full sequence is Putative DUP240 protein DFP1 (179 aa).

2 consecutive transmembrane segments (helical) span residues F4–L24 and P26–F46.

Belongs to the DUP/COS family.

It localises to the membrane. The chain is Putative DUP240 protein DFP1 from Saccharomyces cerevisiae (strain ATCC 204508 / S288c) (Baker's yeast).